The following is a 121-amino-acid chain: Small ribosomal subunit protein uS13 (121 aa).

Residues 88-121 (GMRHRRGLPVRGQHTKNNARTRKGKAVAIANKKK) form a disordered region.

The protein belongs to the universal ribosomal protein uS13 family. As to quaternary structure, part of the 30S ribosomal subunit. Forms a loose heterodimer with protein S19. Forms two bridges to the 50S subunit in the 70S ribosome.

Its function is as follows. Located at the top of the head of the 30S subunit, it contacts several helices of the 16S rRNA. In the 70S ribosome it contacts the 23S rRNA (bridge B1a) and protein L5 of the 50S subunit (bridge B1b), connecting the 2 subunits; these bridges are implicated in subunit movement. Contacts the tRNAs in the A and P-sites. The sequence is that of Small ribosomal subunit protein uS13 from Limosilactobacillus reuteri subsp. reuteri (strain JCM 1112) (Lactobacillus reuteri).